A 64-amino-acid polypeptide reads, in one-letter code: Protein DsrB (64 aa).

It belongs to the DsrB family.

The sequence is that of Protein DsrB from Salmonella arizonae (strain ATCC BAA-731 / CDC346-86 / RSK2980).